The chain runs to 511 residues: Maturase K (511 aa).

This sequence belongs to the intron maturase 2 family. MatK subfamily.

Its subcellular location is the plastid. The protein resides in the chloroplast. Usually encoded in the trnK tRNA gene intron. Probably assists in splicing its own and other chloroplast group II introns. In Hordeum jubatum (Foxtail barley), this protein is Maturase K.